Reading from the N-terminus, the 64-residue chain is Conotoxin VnMLCL-05 (64 aa).

The signal sequence occupies residues 1 to 19; that stretch reads MLCLPVFIILLLLASPAAP. A propeptide spanning residues 20 to 43 is cleaved from the precursor; the sequence is NPLQTRIQSNLIRAGPEDANIKTD. Position 63 is a lysine amide (Lys63).

Belongs to the conotoxin T superfamily. As to expression, expressed by the venom duct.

Its subcellular location is the secreted. In Conus ventricosus (Mediterranean cone), this protein is Conotoxin VnMLCL-05.